The following is a 523-amino-acid chain: 2-isopropylmalate synthase (523 aa).

In terms of domain architecture, Pyruvate carboxyltransferase spans 5–267 (VIIFDTTLRD…HTRINHQEIW (263 aa)). The Mn(2+) site is built by aspartate 14, histidine 202, histidine 204, and asparagine 238. The interval 392–523 (RLDYFSVQSG…QNKENNKETV (132 aa)) is regulatory domain.

Belongs to the alpha-IPM synthase/homocitrate synthase family. LeuA type 1 subfamily. In terms of assembly, homodimer. Mn(2+) is required as a cofactor.

It localises to the cytoplasm. It catalyses the reaction 3-methyl-2-oxobutanoate + acetyl-CoA + H2O = (2S)-2-isopropylmalate + CoA + H(+). The protein operates within amino-acid biosynthesis; L-leucine biosynthesis; L-leucine from 3-methyl-2-oxobutanoate: step 1/4. Catalyzes the condensation of the acetyl group of acetyl-CoA with 3-methyl-2-oxobutanoate (2-ketoisovalerate) to form 3-carboxy-3-hydroxy-4-methylpentanoate (2-isopropylmalate). This chain is 2-isopropylmalate synthase, found in Citrobacter koseri (strain ATCC BAA-895 / CDC 4225-83 / SGSC4696).